Here is a 197-residue protein sequence, read N- to C-terminus: dITP/XTP pyrophosphatase (197 aa).

11–16 (SHNAGK) contributes to the substrate binding site. Mg(2+)-binding residues include E42 and D71. Residue D71 is the Proton acceptor of the active site. Residues S72, 155–158 (FGYD), K178, and 183–184 (HR) contribute to the substrate site.

It belongs to the HAM1 NTPase family. As to quaternary structure, homodimer. Mg(2+) is required as a cofactor.

It catalyses the reaction XTP + H2O = XMP + diphosphate + H(+). The catalysed reaction is dITP + H2O = dIMP + diphosphate + H(+). The enzyme catalyses ITP + H2O = IMP + diphosphate + H(+). Its function is as follows. Pyrophosphatase that catalyzes the hydrolysis of nucleoside triphosphates to their monophosphate derivatives, with a high preference for the non-canonical purine nucleotides XTP (xanthosine triphosphate), dITP (deoxyinosine triphosphate) and ITP. Seems to function as a house-cleaning enzyme that removes non-canonical purine nucleotides from the nucleotide pool, thus preventing their incorporation into DNA/RNA and avoiding chromosomal lesions. This Pseudomonas aeruginosa (strain ATCC 15692 / DSM 22644 / CIP 104116 / JCM 14847 / LMG 12228 / 1C / PRS 101 / PAO1) protein is dITP/XTP pyrophosphatase.